A 506-amino-acid polypeptide reads, in one-letter code: Maturase K (506 aa).

This sequence belongs to the intron maturase 2 family. MatK subfamily.

It is found in the plastid. Its subcellular location is the chloroplast. Functionally, usually encoded in the trnK tRNA gene intron. Probably assists in splicing its own and other chloroplast group II introns. This is Maturase K from Styphnolobium japonicum (Japanese pagoda tree).